A 425-amino-acid polypeptide reads, in one-letter code: Sucrose-phosphatase 1 (425 aa).

This sequence belongs to the sucrose phosphatase family. In terms of assembly, homodimer. The cofactor is Mg(2+).

It catalyses the reaction sucrose 6(F)-phosphate + H2O = sucrose + phosphate. Its pathway is glycan biosynthesis; sucrose biosynthesis; sucrose from D-fructose 6-phosphate and UDP-alpha-D-glucose: step 2/2. Its activity is regulated as follows. Inhibited by EDTA. In terms of biological role, catalyzes the final step of sucrose synthesis. The protein is Sucrose-phosphatase 1 (SPP1) of Nicotiana tabacum (Common tobacco).